The primary structure comprises 214 residues: Guanylate kinase (214 aa).

The Guanylate kinase-like domain occupies 12–191 (GLMLVMSSPS…SIAAVQAILA (180 aa)). ATP is bound at residue 19 to 26 (SPSGAGKT).

This sequence belongs to the guanylate kinase family.

Its subcellular location is the cytoplasm. It carries out the reaction GMP + ATP = GDP + ADP. Essential for recycling GMP and indirectly, cGMP. In Paramagnetospirillum magneticum (strain ATCC 700264 / AMB-1) (Magnetospirillum magneticum), this protein is Guanylate kinase.